Reading from the N-terminus, the 434-residue chain is Probable phosphatidylinositol 3,4,5-trisphosphate 3-phosphatase TEP1 (434 aa).

Residues 33–255 (KTKNDIGLRL…RYHEFFITHE (223 aa)) enclose the Phosphatase tensin-type domain. Cys-193 acts as the Phosphocysteine intermediate in catalysis.

It catalyses the reaction a 1,2-diacyl-sn-glycero-3-phospho-(1D-myo-inositol-3,4,5-trisphosphate) + H2O = a 1,2-diacyl-sn-glycero-3-phospho-(1D-myo-inositol-4,5-bisphosphate) + phosphate. May act as a phosphoinositide 3-phosphatase by regulating PtdIns(3,4,5)P3 levels. This is Probable phosphatidylinositol 3,4,5-trisphosphate 3-phosphatase TEP1 (TEP1) from Saccharomyces cerevisiae (strain ATCC 204508 / S288c) (Baker's yeast).